Here is a 172-residue protein sequence, read N- to C-terminus: Shikimate kinase (172 aa).

17–22 (GTGKST) provides a ligand contact to ATP. Ser-21 provides a ligand contact to Mg(2+). Residues Asp-39, Arg-63, and Gly-84 each contribute to the substrate site. An ATP-binding site is contributed by Arg-122. Arg-140 contributes to the substrate binding site.

This sequence belongs to the shikimate kinase family. In terms of assembly, monomer. Mg(2+) serves as cofactor.

Its subcellular location is the cytoplasm. The enzyme catalyses shikimate + ATP = 3-phosphoshikimate + ADP + H(+). Its pathway is metabolic intermediate biosynthesis; chorismate biosynthesis; chorismate from D-erythrose 4-phosphate and phosphoenolpyruvate: step 5/7. Its function is as follows. Catalyzes the specific phosphorylation of the 3-hydroxyl group of shikimic acid using ATP as a cosubstrate. In Staphylococcus haemolyticus (strain JCSC1435), this protein is Shikimate kinase.